The chain runs to 413 residues: BEN domain-containing protein 7 (413 aa).

Residues K16, K56, and K85 each participate in a glycyl lysine isopeptide (Lys-Gly) (interchain with G-Cter in SUMO2) cross-link. Over residues 78 to 88 the composition is skewed to basic and acidic residues; sequence GKEGEKLKEEP. Disordered stretches follow at residues 78 to 153 and 208 to 243; these read GKEG…GELP and RTAV…MEKK. Composition is skewed to polar residues over residues 99 to 111 and 121 to 153; these read LNSS…SLHP and PPQS…GELP. Residues 211–222 are compositionally biased toward basic residues; that stretch reads VSRKRNKKKKVP. Positions 223-232 are enriched in low complexity; it reads PKTVEPLTVK. K243 participates in a covalent cross-link: Glycyl lysine isopeptide (Lys-Gly) (interchain with G-Cter in SUMO2). The BEN domain occupies 287–392; the sequence is GFDVFMPKSQ…IKLARRRLKR (106 aa). The residue at position 324 (T324) is a Phosphothreonine. Phosphoserine is present on S328.

The sequence is that of BEN domain-containing protein 7 (BEND7) from Homo sapiens (Human).